Consider the following 482-residue polypeptide: MAAFQTAAQLARAVQSGETTPQQLLHGALARAEAVRGLNALVSLNSHAEEQAAAVQGRMQAGETLPLAGVPIVVKDNINVTGTRTTCGSRMLANYVSPYTATAAQKLQGAGAVIVGKANMDEFAMGSSTESSASGPTLNPWDHERVPGGSSGGSAVAVAAGISPVSLGSDTGGSVRQPAALCGVYGFKPTYGRVSRYGLVAYASSLDQIGPFARSAEDLALLMNVIAGHDPRDATSLDAPARFAVGGADSLRGLRVGVIRESLGGNTPGVEAALGATLDALRGAGAVVGEVSIPELEYAIAAYYLIAMPEASSNLARYDGMVYGERVPGGDVTRSMTLTREQGFGQEVQRRILLGTYALSSGYYDAYYAKAMKVRRLIADEFTTAFGQYDVLVTPTSPFPAFRRGEKASDPLAMYAADVDTVAVNLAGLPALSVPAGFEEVDGKRLPVGVQFIAPALQDERLLALAGALEAVGAVQLEMPQD.

Catalysis depends on charge relay system residues Lys-75 and Ser-150. Ser-174 (acyl-ester intermediate) is an active-site residue.

The protein belongs to the amidase family. GatA subfamily. In terms of assembly, heterotrimer of A, B and C subunits.

It carries out the reaction L-glutamyl-tRNA(Gln) + L-glutamine + ATP + H2O = L-glutaminyl-tRNA(Gln) + L-glutamate + ADP + phosphate + H(+). Its function is as follows. Allows the formation of correctly charged Gln-tRNA(Gln) through the transamidation of misacylated Glu-tRNA(Gln) in organisms which lack glutaminyl-tRNA synthetase. The reaction takes place in the presence of glutamine and ATP through an activated gamma-phospho-Glu-tRNA(Gln). This chain is Glutamyl-tRNA(Gln) amidotransferase subunit A, found in Deinococcus radiodurans (strain ATCC 13939 / DSM 20539 / JCM 16871 / CCUG 27074 / LMG 4051 / NBRC 15346 / NCIMB 9279 / VKM B-1422 / R1).